Consider the following 94-residue polypeptide: Selenoprotein K (94 aa).

The chain crosses the membrane as a helical span at residues V20–L42. A disordered region spans residues V46–R94. A non-standard amino acid (selenocysteine) is located at residue U92.

The protein belongs to the selenoprotein K family. Interacts with DERL1, DERL2, DERL3 and SELENOS. The SELENOK-SELENOS complex interacts with VCP. Interacts with ZDHHC6. Cleaved by CAPN2/m-calpain in resting macrophages but not in activated macrophages. Macrophage activation up-regulates expression of the calpain inhibitor CAST/calpastatin, resulting in inhibition of CAPN2 activity. In terms of processing, truncated SELENOK proteins produced by failed UGA/Sec decoding are ubiquitinated by the CRL2(KLHDC2) complex, which recognizes the diglycine (Gly-Gly) at the C-terminus of truncated SELENOK proteins. As to expression, high expression in spleen and intestine (at protein level). Expressed in a range of immune cells including T and B-cells and also in myeloid cells including macrophages, neutrophils and dendritic cells (at protein level).

The protein localises to the endoplasmic reticulum membrane. The protein resides in the cell membrane. In terms of biological role, required for Ca(2+) flux in immune cells and plays a role in T-cell proliferation and in T-cell and neutrophil migration. Involved in endoplasmic reticulum-associated degradation (ERAD) of soluble glycosylated proteins. Required for palmitoylation and cell surface expression of CD36 and involved in macrophage uptake of low-density lipoprotein and in foam cell formation. Together with ZDHHC6, required for palmitoylation of ITPR1 in immune cells, leading to regulate ITPR1 stability and function. Plays a role in protection of cells from ER stress-induced apoptosis. Protects cells from oxidative stress when overexpressed in cardiomyocytes. In Mus musculus (Mouse), this protein is Selenoprotein K.